The following is a 450-amino-acid chain: Na(+)/H(+) antiporter NhaA 2 (450 aa).

The next 12 membrane-spanning stretches (helical) occupy residues 43–63 (VGGAVLLVASAVALVWANSPW), 86–106 (LTLGTWAADGLLAVFFLVVGL), 124–144 (ALPMAAAVGGMVVPALIFVAV), 155–175 (GWAIPTATDIAFAVAVLAVIS), 185–205 (FLLTLAVVDDLLAVTVIAVFY), 208–228 (EINLTALGLSIVPLALFALCV), 234–254 (SWWLLLPLGVATWVLVHESGV), 258–278 (VAGVLLGFTVPVLRSVAAGGP), 299–319 (VAVPVFAFFAAGVAIGGVSGL), 326–346 (PITLGIILGLVVGKPVGIFLT), 364–384 (WIDVFGVALLAGIGFTVSLLI), and 398–418 (FVKVGVLTGSLVAALIAAVLL).

It belongs to the NhaA Na(+)/H(+) (TC 2.A.33) antiporter family.

The protein localises to the cell membrane. It catalyses the reaction Na(+)(in) + 2 H(+)(out) = Na(+)(out) + 2 H(+)(in). Its function is as follows. Na(+)/H(+) antiporter that extrudes sodium in exchange for external protons. This is Na(+)/H(+) antiporter NhaA 2 from Mycobacterium sp. (strain JLS).